The primary structure comprises 189 residues: Interferon alpha-A (189 aa).

The N-terminal stretch at 1 to 23 is a signal peptide; that stretch reads MAPAWSFLLSLLLLSCNAICSLG. 2 disulfide bridges follow: Cys-24–Cys-122 and Cys-52–Cys-162.

This sequence belongs to the alpha/beta interferon family.

The protein resides in the secreted. In terms of biological role, produced by macrophages, IFN-alpha have antiviral activities. Interferon stimulates the production of two enzymes: a protein kinase and an oligoadenylate synthetase. This Bos taurus (Bovine) protein is Interferon alpha-A (IFNAA).